The following is a 692-amino-acid chain: Methionine--tRNA ligase (692 aa).

The 'HIGH' region motif lies at 12–22; it reads PYANGSFHIGH. Positions 143, 146, 156, and 159 each coordinate Zn(2+). The short motif at 341–345 is the 'KMSKS' region element; that stretch reads KMSKS. Position 344 (lysine 344) interacts with ATP. A tRNA-binding domain is found at 586–692; that stretch reads DFAKIDLRIA…PGAQPGMRVR (107 aa).

Belongs to the class-I aminoacyl-tRNA synthetase family. MetG type 1 subfamily. Homodimer. Zn(2+) serves as cofactor.

Its subcellular location is the cytoplasm. The enzyme catalyses tRNA(Met) + L-methionine + ATP = L-methionyl-tRNA(Met) + AMP + diphosphate. In terms of biological role, is required not only for elongation of protein synthesis but also for the initiation of all mRNA translation through initiator tRNA(fMet) aminoacylation. The sequence is that of Methionine--tRNA ligase from Bordetella bronchiseptica (strain ATCC BAA-588 / NCTC 13252 / RB50) (Alcaligenes bronchisepticus).